Here is a 580-residue protein sequence, read N- to C-terminus: Formate--tetrahydrofolate ligase (580 aa).

65-72 is an ATP binding site; that stretch reads TPHGEGKT.

Belongs to the formate--tetrahydrofolate ligase family.

It catalyses the reaction (6S)-5,6,7,8-tetrahydrofolate + formate + ATP = (6R)-10-formyltetrahydrofolate + ADP + phosphate. The protein operates within one-carbon metabolism; tetrahydrofolate interconversion. This is Formate--tetrahydrofolate ligase from Shewanella baltica (strain OS223).